The sequence spans 568 residues: Nucleoprotein (568 aa).

Residues 54–240 (MRKEKRDDSD…IDGNKSAINI (187 aa)) are binding site for the cap structure m7GTP. Mn(2+)-binding residues include Asp388 and Glu390. The Zn(2+) site is built by Glu398, Cys505, His508, and Cys528. Asp532 contacts Mn(2+).

It belongs to the arenaviridae nucleocapsid protein family. Homomultimerizes to form the nucleocapsid. Binds to viral genomic RNA. Interacts with glycoprotein G2. Interacts with protein Z; this interaction probably directs the encapsidated genome to budding sites. Interacts with protein L; this interaction does not interfere with Z-L interaction. Interacts with host IKBKE (via Protein kinase domain); the interaction inhibits IKBKE kinase activity.

The protein localises to the virion. Its subcellular location is the host cytoplasm. Encapsidates the genome, protecting it from nucleases. The encapsidated genomic RNA is termed the nucleocapsid (NC). Serves as template for viral transcription and replication. The increased presence of protein N in host cell does not seem to trigger the switch from transcription to replication as observed in other negative strain RNA viruses. Through the interaction with host IKBKE, strongly inhibits the phosphorylation and nuclear translocation of host IRF3, a protein involved in interferon activation pathway, leading to the inhibition of interferon-beta and IRF3-dependent promoters activation. Also encodes a functional 3'-5' exoribonuclease that degrades preferentially dsRNA substrates and thereby participates in the suppression of interferon induction. In Praomys (African soft-furred rats), this protein is Nucleoprotein.